A 457-amino-acid chain; its full sequence is Argininosuccinate lyase (457 aa).

Belongs to the lyase 1 family. Argininosuccinate lyase subfamily.

The protein resides in the cytoplasm. It catalyses the reaction 2-(N(omega)-L-arginino)succinate = fumarate + L-arginine. Its pathway is amino-acid biosynthesis; L-arginine biosynthesis; L-arginine from L-ornithine and carbamoyl phosphate: step 3/3. This chain is Argininosuccinate lyase, found in Aquifex aeolicus (strain VF5).